We begin with the raw amino-acid sequence, 556 residues long: PPE family protein PPE2 (556 aa).

Residues 8-164 (ASPPEVHSAL…ASYQAVSTAA (157 aa)) are PPE. The interval 201–256 (QKIGYTDFYNNVIQPFINWLTNLPFLQAMFSGFDPWLPSLGNPLTFLSPANIAFAL) is SH3-like. The tract at residues 319 to 340 (LEQTLALLPAALPLLAAPLAPL) is leucine zipper motif. Disordered regions lie at residues 385–418 (TPTPAPAPAPTAVTAPTPPPGPPPPPVTAPPPVT) and 443–556 (GTGV…TRVE). Pro residues predominate over residues 400 to 417 (PTPPPGPPPPPVTAPPPV). Low complexity predominate over residues 456-471 (AEAPAAAAAPEEQVQP). A compositionally biased stretch (basic residues) spans 472-481 (QRRRRPKIKQ). The short motif at 473 to 481 (RRRRPKIKQ) is the Nuclear localization signal element.

It belongs to the mycobacterial PPE family.

It localises to the secreted. It is found in the host cytoplasm. The protein localises to the host nucleus. Functionally, inhibits nitric oxide (NO) production in activated macrophages. Acts by inhibiting expression of the host inducible nitric oxide synthase (iNOS). PPE2 is translocated into the host macrophage nucleus, where it interacts with a GATA-binding site overlapping with the TATA box of NOS2 (iNOS) promoter, and strongly inhibits NOS2 gene transcription. Reduction in NO production in turn facilitates intracellular survival of the bacilli inside the macrophage. In addition, disrupts the assembly of NADPH oxidase complex, which inhibits NADPH oxidase-mediated reactive oxygen species (ROS) generation in macrophages and favors M.tuberculosis survival. Acts by interacting with NCF2, the cytosolic subunit of NADPH oxidase, and preventing translocation of NCF2 and NCF1 to the membrane, which causes a reduction of the functional assembly of NADPH oxidase complex and a decrease in NADPH oxidase activity. This Mycobacterium tuberculosis (strain ATCC 25618 / H37Rv) protein is PPE family protein PPE2 (PPE2).